We begin with the raw amino-acid sequence, 152 residues long: Protein SprT-like (152 aa).

The region spanning 7–148 (QRLVEEVSLQ…GKCKGKLILI (142 aa)) is the SprT-like domain. Histidine 67 lines the Zn(2+) pocket. Glutamate 68 is a catalytic residue. Histidine 71 is a Zn(2+) binding site.

This sequence belongs to the SprT family. Requires Zn(2+) as cofactor.

The protein localises to the cytoplasm. This is Protein SprT-like from Bacillus cereus (strain ATCC 10987 / NRS 248).